The primary structure comprises 758 residues: Ferrichrome receptor FcuA (758 aa).

Residues 1–36 (MNQTISSRAPQKRLAPRLLCVMIGAALGTLSASSWA) form the signal peptide. Positions 66–73 (DTITVVGA) match the TonB box motif. One can recognise a TBDR plug domain in the interval 106-216 (DARNVPFNVI…VGGMINLEPK (111 aa)). Positions 221–758 (TPLTRVTVDY…ALKLSVSMDF (538 aa)) constitute a TBDR beta-barrel domain. The TonB C-terminal box motif lies at 741–758 (YIYQGDPRALKLSVSMDF).

This sequence belongs to the TonB-dependent receptor family.

The protein resides in the cell outer membrane. In terms of biological role, receptor for the hydroxamate siderophore, ferrichrome. Binds also to most other ferrichrome derivatives except enantio ferrichrome and ferric rhodotorulate. In Yersinia enterocolitica, this protein is Ferrichrome receptor FcuA (fcuA).